Reading from the N-terminus, the 1509-residue chain is DNA-directed RNA polymerase subunit beta' (1509 aa).

C75, C77, C90, and C93 together coordinate Zn(2+). Residues D474, D476, and D478 each contribute to the Mg(2+) site. 4 residues coordinate Zn(2+): C804, C878, C885, and C888.

It belongs to the RNA polymerase beta' chain family. As to quaternary structure, the RNAP catalytic core consists of 2 alpha, 1 beta, 1 beta' and 1 omega subunit. When a sigma factor is associated with the core the holoenzyme is formed, which can initiate transcription. The cofactor is Mg(2+). It depends on Zn(2+) as a cofactor.

The catalysed reaction is RNA(n) + a ribonucleoside 5'-triphosphate = RNA(n+1) + diphosphate. Its function is as follows. DNA-dependent RNA polymerase catalyzes the transcription of DNA into RNA using the four ribonucleoside triphosphates as substrates. The chain is DNA-directed RNA polymerase subunit beta' from Sulfurovum sp. (strain NBC37-1).